We begin with the raw amino-acid sequence, 235 residues long: Small ribosomal subunit protein uS3 (235 aa).

The KH type-2 domain maps to 39–107; that stretch reads VRKFLNKELA…PAQINIAEVK (69 aa). The disordered stretch occupies residues 215–235; it reads AQPEQQPADKPKKAPRGKGRK.

It belongs to the universal ribosomal protein uS3 family. Part of the 30S ribosomal subunit. Forms a tight complex with proteins S10 and S14.

Functionally, binds the lower part of the 30S subunit head. Binds mRNA in the 70S ribosome, positioning it for translation. In Pasteurella multocida (strain Pm70), this protein is Small ribosomal subunit protein uS3.